Reading from the N-terminus, the 266-residue chain is Type 1 encapsulin shell protein (266 aa).

It belongs to the encapsulin family. Family 1 subfamily. As to quaternary structure, this encapsulin nanocompartment is formed by 60 subunits; monomers form 12 pentamers which assemble to form shells. Shells are loaded with 4 encapsulated ferritin-like protein decamers (EncFtn) in a tetrahedral arrangement. A 3 nm gap is consistently seen between the shell and the cargo.

It is found in the encapsulin nanocompartment. In terms of biological role, shell component of a type 1 encapsulin nanocompartment. Assembles into proteinaceous shells about 21 nm in diameter. Small pores form at, or close to, the 2-, 3-, and 5-fold symmetry axes. Data analysis suggests the 5-fold pores open and close with maximal and minimal aperatures of 15 and 5 Angstroms. Cargo protein Fer (ferritin-like protein, probably stores iron) is targeted to the interior via its C-terminal extension; empty intact shells can be isolated in the absence of cargo protein. This chain is Type 1 encapsulin shell protein, found in Haliangium ochraceum (strain DSM 14365 / JCM 11303 / SMP-2).